The sequence spans 645 residues: Threonine--tRNA ligase (645 aa).

In terms of domain architecture, TGS spans 1-63; that stretch reads MEQINIQFPD…ETDGSIEIVT (63 aa). Residues 242–540 are catalytic; it reads DHRKIGKELE…LTEETKGAFP (299 aa). The Zn(2+) site is built by C336, H387, and H517.

This sequence belongs to the class-II aminoacyl-tRNA synthetase family. As to quaternary structure, homodimer. Zn(2+) is required as a cofactor.

It localises to the cytoplasm. The enzyme catalyses tRNA(Thr) + L-threonine + ATP = L-threonyl-tRNA(Thr) + AMP + diphosphate + H(+). Catalyzes the attachment of threonine to tRNA(Thr) in a two-step reaction: L-threonine is first activated by ATP to form Thr-AMP and then transferred to the acceptor end of tRNA(Thr). Also edits incorrectly charged L-seryl-tRNA(Thr). The sequence is that of Threonine--tRNA ligase from Staphylococcus aureus (strain bovine RF122 / ET3-1).